A 219-amino-acid polypeptide reads, in one-letter code: Small ribosomal subunit protein uS3 (219 aa).

A KH type-2 domain is found at 39–108 (IKEFIKKNYF…KVTVKVQEIK (70 aa)).

It belongs to the universal ribosomal protein uS3 family. As to quaternary structure, part of the 30S ribosomal subunit. Forms a tight complex with proteins S10 and S14.

In terms of biological role, binds the lower part of the 30S subunit head. Binds mRNA in the 70S ribosome, positioning it for translation. The sequence is that of Small ribosomal subunit protein uS3 from Fusobacterium nucleatum subsp. nucleatum (strain ATCC 25586 / DSM 15643 / BCRC 10681 / CIP 101130 / JCM 8532 / KCTC 2640 / LMG 13131 / VPI 4355).